Here is a 2596-residue protein sequence, read N- to C-terminus: Cadherin EGF LAG seven-pass G-type receptor fmi-1 (2596 aa).

The N-terminal stretch at 1–22 is a signal peptide; it reads MMLDRIMFLLFFILSLVIGSFS. At 23–2229 the chain is on the extracellular side; sequence EYLDDKYYST…IVRVAQMDNM (2207 aa). 8 consecutive Cadherin domains span residues 166–270, 271–375, 376–479, 480–581, 582–682, 683–784, 785–892, and 893–1000; these read QQEK…SPIF, EKDS…APVF, ASDS…APTL, IAAQ…APTF, DKKE…APYF, NDHP…SPQF, TSSS…APTF, and EQLS…KPAL. 6 N-linked (GlcNAc...) asparagine glycosylation sites follow: asparagine 381, asparagine 387, asparagine 562, asparagine 587, asparagine 765, and asparagine 824. Asparagine 1030 and asparagine 1263 each carry an N-linked (GlcNAc...) asparagine glycan. Positions 1251 to 1287 constitute an EGF-like 1 domain; that stretch reads RIDECYRGRCSNNSTCVAFENTYQCECKPGWIGRHCE. 12 disulfides stabilise this stretch: cysteine 1255/cysteine 1266, cysteine 1260/cysteine 1275, cysteine 1277/cysteine 1286, cysteine 1497/cysteine 1526, cysteine 1533/cysteine 1546, cysteine 1540/cysteine 1555, cysteine 1557/cysteine 1567, cysteine 1709/cysteine 1732, cysteine 1738/cysteine 1750, cysteine 1744/cysteine 1759, cysteine 1761/cysteine 1770, and cysteine 1780/cysteine 1785. A Laminin G-like 1 domain is found at 1333 to 1526; that stretch reads SVSFDGEGLL…HKVGQVHEGC (194 aa). The EGF-like 2 domain occupies 1529–1568; that stretch reads RKDFCSTSDGQCSATSKCVNRWGGRICSCPQSVHSTGECV. The region spanning 1577–1732 is the Laminin G-like 2 domain; sequence RGHSLFEEES…KKKGKTRAGC (156 aa). EGF-like domains follow at residues 1734-1771 and 1776-1808; these read VPNR…DTCL and VANV…KNCQ. The N-linked (GlcNAc...) asparagine glycan is linked to asparagine 1789. Cysteine 1798 and cysteine 1807 are joined by a disulfide. N-linked (GlcNAc...) asparagine glycans are attached at residues asparagine 1965, asparagine 1992, asparagine 2152, asparagine 2195, and asparagine 2228. Residues 2054–2219 enclose the GAIN-B domain; it reads EYSTLISKLW…TMFVNDQSSS (166 aa). Cysteine 2174 and cysteine 2201 are disulfide-bonded. The segment at 2174 to 2219 is GPS; sequence CVRFDEKSGTWTARGAALIGLNLTHAACEYNRIGVFTMFVNDQSSS. A helical transmembrane segment spans residues 2230–2250; that stretch reads TSPAIAGVALFLCFLSILLTL. The Cytoplasmic segment spans residues 2251 to 2261; sequence SRRSLKTHSVR. A helical transmembrane segment spans residues 2262 to 2282; it reads IGFILFFAINILNLFFVHKTA. The Extracellular portion of the chain corresponds to 2283 to 2292; the sequence is INQAYCPVRN. A helical membrane pass occupies residues 2293 to 2313; that stretch reads AMLSFTSSAPFAWLFLYGLYI. The Cytoplasmic segment spans residues 2314–2326; it reads YRMLADGSSSPSL. A helical transmembrane segment spans residues 2327-2347; sequence TTSLLVGIVFPCLISFTTFFV. At 2348-2356 the chain is on the extracellular side; sequence TDQCSLSPH. The chain crosses the membrane as a helical span at residues 2357-2377; that stretch reads LWLFWCIILPIGLFLLLSFYA. Topologically, residues 2378 to 2401 are cytoplasmic; that stretch reads AATSVLVSLHKKYDVFVAKYNVKR. The helical transmembrane segment at 2402–2422 threads the bilayer; that stretch reads AVFQHFILTIFTLGMTLTGLF. Residues 2423–2437 lie on the Extracellular side of the membrane; sequence ANQLPLPMEIMEISQ. A helical transmembrane segment spans residues 2438–2458; it reads SIIYLIAALVIFLWCVCDITT. Topologically, residues 2459 to 2596 are cytoplasmic; the sequence is KASDSNPSMW…KNTTSTFNRE (138 aa).

It belongs to the G-protein coupled receptor 2 family. LN-TM7 subfamily. As to expression, expressed in a region of neuropil around the nerve ring and the ventral cord (at protein level). Expressed in the head, tail, ventral cord, nerve ring and neurons including HSN neurons. Expressed in DA, VA, and VB and weakly in the DB cholinergic neurons. Not expressed in ventral D-type GABAergic motorneurons.

It is found in the cell membrane. It localises to the cell projection. The protein resides in the axon. Its subcellular location is the dendrite. Its function is as follows. During ventral cord development, required for axon fasciculation and navigation, mediating both pioneer and follower axon extension, guidance and track formation. Acts in CEPsh glia and SubL neurons to guide follower axons into the nerve ring. Promotes motorneuron development by positively regulating the extension of the anterior neurite of ventral D-type GABAergic motorneurons along the anterior-posterior axis of the ventral nerve cord. Plays a role in synaptogenesis by regulating synaptic vesicle accumulation at GABAergic and cholinergic neuromuscular junctions. The protein is Cadherin EGF LAG seven-pass G-type receptor fmi-1 of Caenorhabditis elegans.